We begin with the raw amino-acid sequence, 355 residues long: Fe-S cluster assembly protein DRE2 (355 aa).

Positions 23-156 are N-terminal SAM-like domain; the sequence is TSFNPRTLLL…KPDYSASVAV (134 aa). Residues 157 to 247 are linker; it reads PLRLRRKDNS…EDTLLTEEDM (91 aa). Residues 189 to 214 form a disordered region; it reads RKSVDMTDDVPEKDVPKVDSPKNDAP. Residues 190 to 213 show a composition bias toward basic and acidic residues; sequence KSVDMTDDVPEKDVPKVDSPKNDA. C257, C268, C271, and C273 together coordinate [2Fe-2S] cluster. The segment at 257–273 is fe-S binding site A; sequence CAPRAGKRRRACKDCTC. Residues C318, C321, C329, and C332 each coordinate [4Fe-4S] cluster. 2 short sequence motifs (cx2C motif) span residues 318-321 and 329-332; these read CGNC and CDGC. Residues 318–332 form a fe-S binding site B region; sequence CGNCSLGDAFRCDGC.

Belongs to the anamorsin family. In terms of assembly, monomer. Interacts with TAH18. Interacts with MIA40. It depends on [2Fe-2S] cluster as a cofactor. The cofactor is [4Fe-4S] cluster.

It localises to the cytoplasm. Its subcellular location is the mitochondrion intermembrane space. Its function is as follows. Component of the cytosolic iron-sulfur (Fe-S) protein assembly (CIA) machinery required for the maturation of extramitochondrial Fe-S proteins. Part of an electron transfer chain functioning in an early step of cytosolic Fe-S biogenesis, facilitating the de novo assembly of a [4Fe-4S] cluster on the scaffold complex CFD1-NBP35. Electrons are transferred to DRE2 from NADPH via the FAD- and FMN-containing protein TAH18. TAH18-DRE2 are also required for the assembly of the diferric tyrosyl radical cofactor of ribonucleotide reductase (RNR), probably by providing electrons for reduction during radical cofactor maturation in the catalytic small subunit RNR2. The protein is Fe-S cluster assembly protein DRE2 of Botryotinia fuckeliana (strain B05.10) (Noble rot fungus).